The sequence spans 283 residues: ATP phosphoribosyltransferase (283 aa).

Belongs to the ATP phosphoribosyltransferase family. Long subfamily. The cofactor is Mg(2+).

It localises to the cytoplasm. It catalyses the reaction 1-(5-phospho-beta-D-ribosyl)-ATP + diphosphate = 5-phospho-alpha-D-ribose 1-diphosphate + ATP. Its pathway is amino-acid biosynthesis; L-histidine biosynthesis; L-histidine from 5-phospho-alpha-D-ribose 1-diphosphate: step 1/9. Its activity is regulated as follows. Feedback inhibited by histidine. Catalyzes the condensation of ATP and 5-phosphoribose 1-diphosphate to form N'-(5'-phosphoribosyl)-ATP (PR-ATP). Has a crucial role in the pathway because the rate of histidine biosynthesis seems to be controlled primarily by regulation of HisG enzymatic activity. The protein is ATP phosphoribosyltransferase of Bacteroides fragilis (strain ATCC 25285 / DSM 2151 / CCUG 4856 / JCM 11019 / LMG 10263 / NCTC 9343 / Onslow / VPI 2553 / EN-2).